The following is a 309-amino-acid chain: Homoserine kinase (309 aa).

91–101 (PIGSGLGSSAC) contributes to the ATP binding site.

Belongs to the GHMP kinase family. Homoserine kinase subfamily.

It localises to the cytoplasm. It carries out the reaction L-homoserine + ATP = O-phospho-L-homoserine + ADP + H(+). Its pathway is amino-acid biosynthesis; L-threonine biosynthesis; L-threonine from L-aspartate: step 4/5. In terms of biological role, catalyzes the ATP-dependent phosphorylation of L-homoserine to L-homoserine phosphate. The polypeptide is Homoserine kinase (Salmonella paratyphi B (strain ATCC BAA-1250 / SPB7)).